We begin with the raw amino-acid sequence, 205 residues long: MQAPPSFYEGDTLEVAKKLLGQKLVHIVNGIKRSGIIVEVEAYKGPDDKAAHSYGGRRTDRTEVMFGAPGHAYVYLIYGMYHCFNVITAPVGTPQGVLIRALEPVDGIEEIKLARYNKTDITKAQYKNLTNGPGKLCRALGITLEERGVSLQSDTLHIELVPEEKHISSQYKITAGPRINIDYAEEAVHYPWRFYYEGHPFVSKK.

The protein belongs to the DNA glycosylase MPG family.

The protein is Putative 3-methyladenine DNA glycosylase of Bacillus anthracis (strain A0248).